The primary structure comprises 427 residues: Enolase (427 aa).

Q163 is a (2R)-2-phosphoglycerate binding site. The Proton donor role is filled by E205. The Mg(2+) site is built by D242, E285, and D312. Residues K337, R366, S367, and K388 each coordinate (2R)-2-phosphoglycerate. The active-site Proton acceptor is K337.

This sequence belongs to the enolase family. Mg(2+) serves as cofactor.

Its subcellular location is the cytoplasm. The protein resides in the secreted. The protein localises to the cell surface. It catalyses the reaction (2R)-2-phosphoglycerate = phosphoenolpyruvate + H2O. The protein operates within carbohydrate degradation; glycolysis; pyruvate from D-glyceraldehyde 3-phosphate: step 4/5. Functionally, catalyzes the reversible conversion of 2-phosphoglycerate (2-PG) into phosphoenolpyruvate (PEP). It is essential for the degradation of carbohydrates via glycolysis. The chain is Enolase from Bradyrhizobium diazoefficiens (strain JCM 10833 / BCRC 13528 / IAM 13628 / NBRC 14792 / USDA 110).